The chain runs to 1288 residues: MALSLSQDRSFDDDDSVDGSRPSSAQAAFKVPKVPKKPAESASSSRRPSATGAAKSGASKEGAGAVDEEDFIKAFTDVPTVQIYSTRDLEDNLNKIREVLSDDKHDWDHRANALKKIRSLLVAGATDYDCFYQHLRLLDGAFKLSAKDLRSQVVREACITVAYLSTLLGNKFDHGAEGIVPVLFNLIPNCAKVMATSGTAAIRIIIRHTHVPRLIPLIASNCTSKSVAVRRRCYEFLDLLLQEWQTHSLERHAAVLVESIKKGIRDADAEARVEARKAYWGLRAHFPGEAESLYNSLESSYQRTLQSCLKSSGSVASLPQSDRSSSSSQESLNRPLSKWSAAPGRVPAGSKSSGSPASLQRSRSDVDVNAAAGAKARHSGQAGGAGRVTTGLTPGSYASLGRLRTKQTLSTASSVGSSQVDSRGRTRSKMASQSQRSDDSDCTPGSQSATPVGAGSRSGSPGRVLASTALSTLSTGAQRVSAAPGSHRRSRIPRSQGCSRDSSPTRLSVAPSNISHIYNGSKGARGSRIPRPSVSQGCSREASRESSRDTSPVRSFTPLGSGLGMSQSSRLSSSVSAMRVLNTGSDVEEALADALKKPARRRYDTYGMYSDDDANSDASSACSERSYSSRNGSIPTYMRQTEDVAEVLNRCASANWSERKEGLMGLQALLKNHRTLSRVELKRLCEIFTRMFADPHSKRDPRGFGTVESGISSASFKRVFSMFLETLVDFIAVHKEDLQDWLFVLLTQLLKKMGADLLGSVQAKVQKALDVTRESFPNDLQFTILMRFTVDQTQTPNLKVKVAILKYIETLTLQMEPQDFVNTGETRLAVSRIITWTTEPKSSDVRKAAQSVLISLFQLNTPEFTMLLGALPKTFQDGATKLLQNHLRNTGNTAQASIGSPLTRHTPRSPASWSSPLTSPTNTSQNTPSPSAFDYDTENMNSEEIYSSLRGVSQAIQNFSVRSQEDMTEPPRKREGDGGEETVDSGRTALDNKTSLLNTMPLLSSSPRPSRDYQPVNYSDSSFGSSSFNKSLKDADQEESLTDDSGVDQSEVVAELLKELSNHSERVEERKAALCELMRLIRETQLHVWDEHFKTILLLLLETLGDGEHVIRALALRVLKEILNRQPWRFKNYAELTIMKALEAHKDPHKEVVRAAEEAASMLATSISPDQCIKVLCPIIQSADYPINLAAIKMLTKVIDRLPKEGLIQMLPEIVPGLIQGYDNSESSVRKACVFCLVAIYAVIGEDLKPHLSQLSGSKLKLLNLYIKRAQSGSSGSDQSSDVGGQGL.

Positions 1 to 62 are disordered; sequence MALSLSQDRS…AAKSGASKEG (62 aa). Low complexity-rich tracts occupy residues 19–32 and 40–62; these read GSRPSSAQAAFKVP and ESASSSRRPSATGAAKSGASKEG. Residues 62–312 are TOG 1; the sequence is GAGAVDEEDF…RTLQSCLKSS (251 aa). 3 HEAT repeats span residues 174–209, 210–246, and 251–288; these read HGAEGIVPVLFNLIPNCAKVMATSGTAAIRIIIRHT, HVPRLIPLIASNCTSKSVAVRRRCYEFLDLLLQEWQT, and RHAAVLVESIKKGIRDADAEARVEARKAYWGLRAHFPG. 2 disordered regions span residues 314 to 571 and 614 to 634; these read SVAS…SSRL and ANSDASSACSERSYSSRNGSI. Low complexity-rich tracts occupy residues 317 to 337 and 347 to 358; these read SLPQSDRSSSSSQESLNRPLS and PAGSKSSGSPAS. Polar residues-rich tracts occupy residues 406–421 and 468–478; these read KQTLSTASSVGSSQVD and TALSTLSTGAQ. Residues 490-493 carry the SXIP motif 1 motif; that stretch reads SRIP. A compositionally biased stretch (polar residues) spans 496–518; it reads QGCSRDSSPTRLSVAPSNISHIY. Positions 527 to 530 match the SXIP motif 2 motif; that stretch reads SRIP. Residues 616–630 are compositionally biased toward low complexity; that stretch reads SDASSACSERSYSSR. The tract at residues 638–889 is TOG 2; the sequence is MRQTEDVAEV…TKLLQNHLRN (252 aa). HEAT repeat units follow at residues 718 to 755 and 780 to 817; these read RVFSMFLETLVDFIAVHKEDLQDWLFVLLTQLLKKMGA and LQFTILMRFTVDQTQTPNLKVKVAILKYIETLTLQMEP. A compositionally biased stretch (polar residues) spans 891-900; sequence GNTAQASIGS. Disordered stretches follow at residues 891 to 936 and 960 to 1047; these read GNTA…FDYD and SVRS…DSGV. Residues 912–931 are compositionally biased toward low complexity; that stretch reads SWSSPLTSPTNTSQNTPSPS. Basic and acidic residues predominate over residues 963–977; sequence SQEDMTEPPRKREGD. The segment covering 1019 to 1030 has biased composition (low complexity); it reads SDSSFGSSSFNK. Acidic residues predominate over residues 1036–1046; it reads DQEESLTDDSG. 4 HEAT repeats span residues 1047 to 1086, 1091 to 1128, 1167 to 1204, and 1209 to 1246; these read VDQSEVVAELLKELSNHSERVEERKAALCELMRLIRETQL, EHFKTILLLLLETLGDGEHVIRALALRVLKEILNRQPW, ISPDQCIKVLCPIIQSADYPINLAAIKMLTKVIDRLPK, and QMLPEIVPGLIQGYDNSESSVRKACVFCLVAIYAVIGE.

This sequence belongs to the CLASP family. In terms of assembly, interacts with microtubules.

It localises to the cytoplasm. Its subcellular location is the cytoskeleton. The protein resides in the microtubule organizing center. It is found in the centrosome. The protein localises to the chromosome. It localises to the centromere. Its subcellular location is the kinetochore. The protein resides in the spindle. It is found in the golgi apparatus. The protein localises to the trans-Golgi network. It localises to the cell membrane. Its subcellular location is the cell projection. The protein resides in the ruffle membrane. Functionally, microtubule plus-end tracking protein that promotes the stabilization of dynamic microtubules. Involved in the nucleation of noncentrosomal microtubules originating from the trans-Golgi network (TGN). Required for the polarization of the cytoplasmic microtubule arrays in migrating cells towards the leading edge of the cell. May act at the cell cortex to enhance the frequency of rescue of depolymerizing microtubules. This cortical microtubule stabilizing activity is regulated at least in part by phosphatidylinositol 3-kinase signaling. Also performs a similar stabilizing function at the kinetochore which is essential for the bipolar alignment of chromosomes on the mitotic spindle. The chain is CLIP-associating protein 2 (clasp2) from Danio rerio (Zebrafish).